The following is a 117-amino-acid chain: Gamma-aminobutyric acid receptor-associated protein-like 3 (117 aa).

The interval 1–22 (MKFQYKEVHPFEYRKKEGEKIR) is interaction with beta-tubulin. Residues 36-68 (APKARVPDLDRRKYLVPSDLTDGQFYLLIRKRI) are interaction with GABRG2. Gly-116 is lipidated: Phosphatidylethanolamine amidated glycine. Residue Lys-117 is a propeptide, removed in mature form.

It belongs to the ATG8 family. As to quaternary structure, interacts with GABRG2 and beta-tubulin. Post-translationally, the precursor molecule is cleaved by ATG4B to form the cytosolic form, GABARAPL3-I. This is activated by APG7L/ATG7, transferred to ATG3 and conjugated to phospholipid to form the membrane-bound form, GABARAPL3-II. ATG4B also mediates the delipidation required for GABARAPL1 recycling when autophagosomes fuse with lysosomes. In terms of tissue distribution, ubiquitous. Expressed at very high levels in the brain, heart, peripheral blood leukocytes, liver, kidney, placenta and skeletal muscle. Expressed at very low levels in thymus and small intestine.

The protein localises to the cytoplasm. It localises to the cytoskeleton. It is found in the cytoplasmic vesicle. The protein resides in the autophagosome membrane. In terms of biological role, ubiquitin-like modifier involved in autophagosome formation. Whereas LC3s are involved in elongation of the phagophore membrane, the GABARAP/GATE-16 subfamily is essential for a later stage in autophagosome maturation. In Homo sapiens (Human), this protein is Gamma-aminobutyric acid receptor-associated protein-like 3 (GABARAPL3).